Here is a 390-residue protein sequence, read N- to C-terminus: Pre-mycofactocin synthase (390 aa).

In terms of domain architecture, FMN hydroxy acid dehydrogenase spans 1–383 (MADEWFETVA…RSDDILIPAD (383 aa)). Positions 108, 128, 156, and 254 each coordinate FMN. His278 acts as the Proton acceptor in catalysis. FMN-binding positions include 309-313 (DGGIR) and 332-333 (GR).

The protein belongs to the FMN-dependent alpha-hydroxy acid dehydrogenase family. The cofactor is FMN.

The enzyme catalyses 3-amino-5-[(4-hydroxyphenyl)methyl]-4,4-dimethyl-2-pyrrolidin-2-one + O2 + H2O = pre-mycofactocin + H2O2 + NH4(+). Functionally, involved in the biosynthesis of the enzyme cofactor mycofactocin (MFT). Catalyzes the oxidative deamination of AHDP (3-amino-5-[(4-hydroxyphenyl)methyl]-4,4-dimethyl-2-pyrrolidin-2-one), forming an alpha-keto amide moiety on the resulting molecule, which is called pre-mycofactocin (PMFT). This reaction occurs via a 5-[(4-hydroxyphenyl)methyl]-3-imino-4,4-dimethylpyrrolidin-2-one intermediate, which converts to PMFT. The alpha-keto amide moiety is the redox-active center for the redox activity of mycofactocin. This chain is Pre-mycofactocin synthase, found in Mycobacterium ulcerans (strain Agy99).